The sequence spans 69 residues: Guanine nucleotide-binding protein G(I)/G(S)/G(O) subunit gamma-T2 (69 aa).

A Cysteine methyl ester modification is found at Cys66. Cys66 carries the S-farnesyl cysteine lipid modification. The propeptide at 67 to 69 is removed in mature form; that stretch reads IIS.

The protein belongs to the G protein gamma family. In terms of assembly, g proteins are composed of 3 units, alpha, beta and gamma.

It is found in the cell membrane. Its function is as follows. Guanine nucleotide-binding proteins (G proteins) are involved as a modulator or transducer in various transmembrane signaling systems. The beta and gamma chains are required for the GTPase activity, for replacement of GDP by GTP, and for G protein-effector interaction. The polypeptide is Guanine nucleotide-binding protein G(I)/G(S)/G(O) subunit gamma-T2 (GNGT2) (Bos taurus (Bovine)).